The sequence spans 375 residues: 23S rRNA (uracil(747)-C(5))-methyltransferase RlmC (375 aa).

[4Fe-4S] cluster contacts are provided by Cys-3, Cys-11, Cys-14, and Cys-87. The S-adenosyl-L-methionine site is built by Gln-212, Phe-241, Glu-262, and Asn-307. The active-site Nucleophile is Cys-334.

It belongs to the class I-like SAM-binding methyltransferase superfamily. RNA M5U methyltransferase family. RlmC subfamily.

It carries out the reaction uridine(747) in 23S rRNA + S-adenosyl-L-methionine = 5-methyluridine(747) in 23S rRNA + S-adenosyl-L-homocysteine + H(+). In terms of biological role, catalyzes the formation of 5-methyl-uridine at position 747 (m5U747) in 23S rRNA. This Escherichia coli O6:H1 (strain CFT073 / ATCC 700928 / UPEC) protein is 23S rRNA (uracil(747)-C(5))-methyltransferase RlmC.